We begin with the raw amino-acid sequence, 393 residues long: Phosphatidate cytidylyltransferase (393 aa).

The next 8 helical transmembrane spans lie at 49 to 69 (NFFRRLVLSIVMISGFCWISV), 73 to 93 (IYSFGLIIFLTISIIREIIGI), 108 to 128 (IILGLAVPIYSYLVFPSIMMM), 141 to 161 (LSFVCFYSYVAAFMCFVASLR), 171 to 191 (LFALIHLSTYTMAIAAKCAIF), 198 to 218 (FWFVFPALLVISNDISAYVVG), 237 to 257 (GFIGAFIFTTAVGFALGHLHV), and 290 to 310 (IHIIPFIFVASFVAPFSGFLA).

This sequence belongs to the CDS family.

It is found in the membrane. It catalyses the reaction a 1,2-diacyl-sn-glycero-3-phosphate + CTP + H(+) = a CDP-1,2-diacyl-sn-glycerol + diphosphate. Its pathway is phospholipid metabolism; CDP-diacylglycerol biosynthesis; CDP-diacylglycerol from sn-glycerol 3-phosphate: step 3/3. This is Phosphatidate cytidylyltransferase (CDS1) from Encephalitozoon cuniculi (strain GB-M1) (Microsporidian parasite).